Reading from the N-terminus, the 206-residue chain is MFLIVGLGNPGEKYLNNRHNVGFQCVAEFARRHHLSFDGKRSDARIAEGLVNGQRVALARPQTFMNDSGKSVVGLVNWYKIDPASELLVVYDDLDLPFGTIKLRNQGSSGGQRGMNSIIQLLGTQKFARLRFGIGRPPEGWEVINFVLGNWNAAERETLPKLYDRAVEACELCLSDGVTKAMNAVNGEAPKKSKDQAKEPANEQPR.

Residue Tyr14 coordinates tRNA. Catalysis depends on His19, which acts as the Proton acceptor. 2 residues coordinate tRNA: Phe64 and Asn66. The tract at residues 185 to 206 is disordered; sequence VNGEAPKKSKDQAKEPANEQPR. The span at 189 to 206 shows a compositional bias: basic and acidic residues; sequence APKKSKDQAKEPANEQPR.

It belongs to the PTH family. As to quaternary structure, monomer.

It localises to the cytoplasm. It carries out the reaction an N-acyl-L-alpha-aminoacyl-tRNA + H2O = an N-acyl-L-amino acid + a tRNA + H(+). Its function is as follows. Hydrolyzes ribosome-free peptidyl-tRNAs (with 1 or more amino acids incorporated), which drop off the ribosome during protein synthesis, or as a result of ribosome stalling. Catalyzes the release of premature peptidyl moieties from peptidyl-tRNA molecules trapped in stalled 50S ribosomal subunits, and thus maintains levels of free tRNAs and 50S ribosomes. The protein is Peptidyl-tRNA hydrolase of Herpetosiphon aurantiacus (strain ATCC 23779 / DSM 785 / 114-95).